The primary structure comprises 117 residues: Small ribosomal subunit protein bS6 (117 aa).

A disordered region spans residues 97 to 117; it reads TEEPSAILTKKDDRRGRRERN.

Belongs to the bacterial ribosomal protein bS6 family.

Its function is as follows. Binds together with bS18 to 16S ribosomal RNA. This chain is Small ribosomal subunit protein bS6, found in Maricaulis maris (strain MCS10) (Caulobacter maris).